Reading from the N-terminus, the 546-residue chain is Membrane protein insertase YidC (546 aa).

Residues 8–28 (ILLATVLSVGILILWQVIFPT) traverse the membrane as a helical segment. The disordered stretch occupies residues 31 to 70 (VPPKPAPPPAAEVAKPAAPASPAPGAAAPAVPAPPPDAPE). Low complexity predominate over residues 41–60 (AEVAKPAAPASPAPGAAAPA). Transmembrane regions (helical) follow at residues 326–346 (IDYGAVAKFFALFARGLLYVM), 356–376 (WGVAIILLTVLVRLVLFPLTY), 422–442 (LGGCLPMLLQMPVWFALYAAL), 459–479 (LTAHDPYFILPIAMGISSFVM), and 498–518 (FFPGFFTVIMLFVPGGLTLYI).

It belongs to the OXA1/ALB3/YidC family. Type 1 subfamily. As to quaternary structure, interacts with the Sec translocase complex via SecD. Specifically interacts with transmembrane segments of nascent integral membrane proteins during membrane integration.

It is found in the cell inner membrane. Required for the insertion and/or proper folding and/or complex formation of integral membrane proteins into the membrane. Involved in integration of membrane proteins that insert both dependently and independently of the Sec translocase complex, as well as at least some lipoproteins. Aids folding of multispanning membrane proteins. The protein is Membrane protein insertase YidC of Anaeromyxobacter sp. (strain K).